The sequence spans 513 residues: Glycogen synthase (513 aa).

Residue K47 coordinates ADP-alpha-D-glucose.

The protein belongs to the glycosyltransferase 1 family. Bacterial/plant glycogen synthase subfamily.

It catalyses the reaction [(1-&gt;4)-alpha-D-glucosyl](n) + ADP-alpha-D-glucose = [(1-&gt;4)-alpha-D-glucosyl](n+1) + ADP + H(+). It functions in the pathway glycan biosynthesis; glycogen biosynthesis. Its function is as follows. Synthesizes alpha-1,4-glucan chains using ADP-glucose. The chain is Glycogen synthase from Pseudomonas paraeruginosa (strain DSM 24068 / PA7) (Pseudomonas aeruginosa (strain PA7)).